Reading from the N-terminus, the 314-residue chain is Ribosomal protein L11 methyltransferase (314 aa).

S-adenosyl-L-methionine-binding residues include threonine 163, glycine 184, aspartate 206, and asparagine 248.

The protein belongs to the methyltransferase superfamily. PrmA family.

The protein resides in the cytoplasm. The catalysed reaction is L-lysyl-[protein] + 3 S-adenosyl-L-methionine = N(6),N(6),N(6)-trimethyl-L-lysyl-[protein] + 3 S-adenosyl-L-homocysteine + 3 H(+). In terms of biological role, methylates ribosomal protein L11. The protein is Ribosomal protein L11 methyltransferase of Lactobacillus delbrueckii subsp. bulgaricus (strain ATCC BAA-365 / Lb-18).